A 556-amino-acid chain; its full sequence is Arginine--tRNA ligase (556 aa).

A 'HIGH' region motif is present at residues 132-142 (ANPTGDLHLGH).

Belongs to the class-I aminoacyl-tRNA synthetase family. As to quaternary structure, monomer.

Its subcellular location is the cytoplasm. It catalyses the reaction tRNA(Arg) + L-arginine + ATP = L-arginyl-tRNA(Arg) + AMP + diphosphate. This chain is Arginine--tRNA ligase, found in Bacillus cereus (strain ATCC 10987 / NRS 248).